The sequence spans 415 residues: Levansucrase (415 aa).

Sucrose contacts are provided by Trp45, Asp46, Ala132, Arg202, and Asp203. Residue Asp46 is the Nucleophile of the active site. The active-site Proton donor/acceptor is the Glu287.

This sequence belongs to the glycosyl hydrolase 68 family.

It localises to the secreted. The catalysed reaction is [6)-beta-D-fructofuranosyl-(2-&gt;](n) alpha-D-glucopyranoside + sucrose = [6)-beta-D-fructofuranosyl-(2-&gt;](n+1) alpha-D-glucopyranoside + D-glucose. Functionally, catalyzes the synthesis of levan, a fructose polymer, by transferring the fructosyl moiety from sucrose to a growing acceptor molecule. This is Levansucrase from Erwinia amylovora (Fire blight bacteria).